A 1294-amino-acid polypeptide reads, in one-letter code: von Willebrand factor A domain-containing protein 3B (1294 aa).

In terms of domain architecture, VWFA spans 508–684 (CIYILIDTSH…EDLTLLVKEM (177 aa)). Disordered stretches follow at residues 732 to 754 (CAKP…KGPW), 778 to 803 (RSQM…SSRR), 1012 to 1036 (APGE…DPLK), and 1193 to 1247 (DTQD…PRTA). Residues 738–748 (DVDSTQTSSLN) are compositionally biased toward polar residues. Residues 778 to 787 (RSQMSSLRSS) show a composition bias toward low complexity. The span at 1193-1202 (DTQDSREPRR) shows a compositional bias: basic and acidic residues. Residues 1203 to 1212 (EKPRRKKRPA) show a composition bias toward basic residues. Residues 1213-1236 (KQPLQQAAPSDSDGSSHGISSHGS) show a composition bias toward low complexity.

It is found in the cytoplasm. The protein is von Willebrand factor A domain-containing protein 3B (VWA3B) of Homo sapiens (Human).